The chain runs to 250 residues: 3-deoxy-manno-octulosonate cytidylyltransferase (250 aa).

Belongs to the KdsB family.

Its subcellular location is the cytoplasm. The catalysed reaction is 3-deoxy-alpha-D-manno-oct-2-ulosonate + CTP = CMP-3-deoxy-beta-D-manno-octulosonate + diphosphate. Its pathway is nucleotide-sugar biosynthesis; CMP-3-deoxy-D-manno-octulosonate biosynthesis; CMP-3-deoxy-D-manno-octulosonate from 3-deoxy-D-manno-octulosonate and CTP: step 1/1. It functions in the pathway bacterial outer membrane biogenesis; lipopolysaccharide biosynthesis. Functionally, activates KDO (a required 8-carbon sugar) for incorporation into bacterial lipopolysaccharide in Gram-negative bacteria. This chain is 3-deoxy-manno-octulosonate cytidylyltransferase, found in Azorhizobium caulinodans (strain ATCC 43989 / DSM 5975 / JCM 20966 / LMG 6465 / NBRC 14845 / NCIMB 13405 / ORS 571).